Reading from the N-terminus, the 133-residue chain is Small ribosomal subunit protein bS6 (133 aa).

Belongs to the bacterial ribosomal protein bS6 family.

In terms of biological role, binds together with bS18 to 16S ribosomal RNA. This chain is Small ribosomal subunit protein bS6, found in Chlorobium phaeovibrioides (strain DSM 265 / 1930) (Prosthecochloris vibrioformis (strain DSM 265)).